The following is a 224-amino-acid chain: Cytidylate kinase (224 aa).

11 to 19 (GPAAAGKST) lines the ATP pocket.

It belongs to the cytidylate kinase family. Type 1 subfamily.

It localises to the cytoplasm. The catalysed reaction is CMP + ATP = CDP + ADP. It catalyses the reaction dCMP + ATP = dCDP + ADP. This is Cytidylate kinase from Listeria monocytogenes serovar 1/2a (strain ATCC BAA-679 / EGD-e).